The sequence spans 967 residues: RNA polymerase-associated protein RapA (967 aa).

The Helicase ATP-binding domain maps to 163–337 (EVGQRTAPRV…FARLSLLDPD (175 aa)). ATP is bound at residue 176 to 183 (DEVGLGKT). Positions 283-286 (DEAH) match the DEAH box motif. The Helicase C-terminal domain maps to 489–660 (RLEWLITFLK…KFLQNPTALE (172 aa)).

It belongs to the SNF2/RAD54 helicase family. RapA subfamily. Interacts with the RNAP. Has a higher affinity for the core RNAP than for the holoenzyme. Its ATPase activity is stimulated by binding to RNAP.

In terms of biological role, transcription regulator that activates transcription by stimulating RNA polymerase (RNAP) recycling in case of stress conditions such as supercoiled DNA or high salt concentrations. Probably acts by releasing the RNAP, when it is trapped or immobilized on tightly supercoiled DNA. Does not activate transcription on linear DNA. Probably not involved in DNA repair. The polypeptide is RNA polymerase-associated protein RapA (Pasteurella multocida (strain Pm70)).